The primary structure comprises 92 residues: Small ribosomal subunit protein uS19c (92 aa).

This sequence belongs to the universal ribosomal protein uS19 family.

The protein resides in the plastid. It localises to the chloroplast. Functionally, protein S19 forms a complex with S13 that binds strongly to the 16S ribosomal RNA. In Populus alba (White poplar), this protein is Small ribosomal subunit protein uS19c.